We begin with the raw amino-acid sequence, 354 residues long: Small ribosomal subunit biogenesis GTPase RsgA 1 (354 aa).

The span at 1–24 shows a compositional bias: basic residues; that stretch reads MAKKKKLTKGQVRRVRSNQQKRLK. Residues 1–28 form a disordered region; that stretch reads MAKKKKLTKGQVRRVRSNQQKRLKKQEE. The CP-type G domain maps to 113 to 274; the sequence is YDGLKPVAAN…LIDSPGVREF (162 aa). GTP-binding positions include 160-163 and 214-222; these read NKVD and GQSGVGKSS. Zn(2+)-binding residues include C298, C303, H305, and C311.

It belongs to the TRAFAC class YlqF/YawG GTPase family. RsgA subfamily. Monomer. Associates with 30S ribosomal subunit, binds 16S rRNA. It depends on Zn(2+) as a cofactor.

It localises to the cytoplasm. One of several proteins that assist in the late maturation steps of the functional core of the 30S ribosomal subunit. Helps release RbfA from mature subunits. May play a role in the assembly of ribosomal proteins into the subunit. Circularly permuted GTPase that catalyzes slow GTP hydrolysis, GTPase activity is stimulated by the 30S ribosomal subunit. The protein is Small ribosomal subunit biogenesis GTPase RsgA 1 of Vibrio parahaemolyticus serotype O3:K6 (strain RIMD 2210633).